A 1404-amino-acid polypeptide reads, in one-letter code: G8 domain-containing protein DDB_G0286897 (1404 aa).

A signal peptide spans 1-20; that stretch reads MNYFKYFIFVVFLFFTIVKC. Helical transmembrane passes span 97–117 and 128–148; these read LVGFNWISMLIASLLSIGLFA and IIILIIGFICLSLMINGIQSI. Residues N352, N365, N413, N481, N639, N838, N979, N1003, N1017, N1253, and N1334 are each glycosylated (N-linked (GlcNAc...) asparagine). One can recognise a G8 domain in the interval 553–679; it reads STWASGFVPL…YHNTWTKLST (127 aa).

The protein belongs to the comF family.

It is found in the membrane. In Dictyostelium discoideum (Social amoeba), this protein is G8 domain-containing protein DDB_G0286897.